We begin with the raw amino-acid sequence, 672 residues long: tRNA(Met) cytidine acetyltransferase TmcA (672 aa).

ATP-binding positions include Gln-180, 202–211, and Arg-319; that span reads GRGKSALAGQ. One can recognise an N-acetyltransferase domain in the interval 349-531; sequence IEISAFYQQA…SGCYTAMALL (183 aa). Residues 461–463, 468–474, and Arg-506 each bind acetyl-CoA; these read IAV and QREGIGQ.

The protein belongs to the RNA cytidine acetyltransferase family. TmcA subfamily.

It is found in the cytoplasm. The catalysed reaction is cytidine(34) in elongator tRNA(Met) + acetyl-CoA + ATP + H2O = N(4)-acetylcytidine(34) in elongator tRNA(Met) + ADP + phosphate + CoA + H(+). Its function is as follows. Catalyzes the formation of N(4)-acetylcytidine (ac(4)C) at the wobble position of tRNA(Met), by using acetyl-CoA as an acetyl donor and ATP (or GTP). This chain is tRNA(Met) cytidine acetyltransferase TmcA, found in Salmonella typhimurium (strain LT2 / SGSC1412 / ATCC 700720).